Reading from the N-terminus, the 102-residue chain is Large ribosomal subunit protein uL24 (102 aa).

The tract at residues 1-22 (MHVKKGDTVQVMSGKDKGKQGV) is disordered.

The protein belongs to the universal ribosomal protein uL24 family. As to quaternary structure, part of the 50S ribosomal subunit.

Its function is as follows. One of two assembly initiator proteins, it binds directly to the 5'-end of the 23S rRNA, where it nucleates assembly of the 50S subunit. Functionally, one of the proteins that surrounds the polypeptide exit tunnel on the outside of the subunit. This is Large ribosomal subunit protein uL24 from Exiguobacterium sp. (strain ATCC BAA-1283 / AT1b).